Here is a 140-residue protein sequence, read N- to C-terminus: Large ribosomal subunit protein bL17 (140 aa).

The protein belongs to the bacterial ribosomal protein bL17 family. Part of the 50S ribosomal subunit. Contacts protein L32.

The sequence is that of Large ribosomal subunit protein bL17 from Beijerinckia indica subsp. indica (strain ATCC 9039 / DSM 1715 / NCIMB 8712).